The primary structure comprises 449 residues: Exodeoxyribonuclease 7 large subunit (449 aa).

The protein belongs to the XseA family. In terms of assembly, heterooligomer composed of large and small subunits.

The protein resides in the cytoplasm. It catalyses the reaction Exonucleolytic cleavage in either 5'- to 3'- or 3'- to 5'-direction to yield nucleoside 5'-phosphates.. Its function is as follows. Bidirectionally degrades single-stranded DNA into large acid-insoluble oligonucleotides, which are then degraded further into small acid-soluble oligonucleotides. This Salmonella typhi protein is Exodeoxyribonuclease 7 large subunit.